Consider the following 183-residue polypeptide: MARYKFNPENPNRVCKAKGTNFRVHYKNTSETGRAIKGMHLHKARSYLSNVVEHKQCIPFRRHKGGVGRCAQAKNFNTTQGRWPKKSCEFMLQLLKNAESNAELRGLDVDSLVVAHVSVDAAAKMRRRTYRAHGRINPYMSSPCHIELCLEERDRVVPKGDIKTAAKKQSAKKLKKQKMMYRE.

The interval 163–183 (KTAAKKQSAKKLKKQKMMYRE) is disordered. A compositionally biased stretch (basic residues) spans 165–183 (AAKKQSAKKLKKQKMMYRE).

This sequence belongs to the universal ribosomal protein uL22 family.

The sequence is that of Large ribosomal subunit protein uL22 (rpl-17) from Pectinaria gouldii (Trumpet worm).